We begin with the raw amino-acid sequence, 695 residues long: Tripartite terminase subunit 1 (695 aa).

Residues 182–210 (CLECLQEVCLTPNQGTSLQAMLPDTACSH) form a C3H1-type zinc finger. 621 to 628 (YNRTWERE) lines the ATP pocket.

It belongs to the herpesviridae TRM1 protein family. In terms of assembly, associates with TRM2 and TRM3 to form the tripartite terminase complex. Interacts with portal protein.

Its subcellular location is the host nucleus. Its function is as follows. Component of the molecular motor that translocates viral genomic DNA in empty capsid during DNA packaging. Forms a tripartite terminase complex together with TRM2 and TRM3 in the host cytoplasm. Once the complex reaches the host nucleus, it interacts with the capsid portal vertex. This portal forms a ring in which genomic DNA is translocated into the capsid. TRM1 carries an endonuclease activity that plays an important role for the cleavage of concatemeric viral DNA into unit length genomes. This chain is Tripartite terminase subunit 1, found in Homo sapiens (Human).